Reading from the N-terminus, the 143-residue chain is MFLGTYTPKLDDKGRLTLPAKFRDALAGGLMVTKSQDHSLAVYPRDEFEKLARRASQASRSNPEARAFLRSLAAATDEQHPDAQGRITLSADHRRYANLSKDCVVIGSVDYLEIWDAQAWQEYQQAHEENFSAATDETLRDII.

2 SpoVT-AbrB domains span residues Thr-5–Glu-47 and Thr-76–Ala-119.

Belongs to the MraZ family. Forms oligomers.

Its subcellular location is the cytoplasm. It localises to the nucleoid. The sequence is that of Transcriptional regulator MraZ from Mycolicibacterium smegmatis (strain ATCC 700084 / mc(2)155) (Mycobacterium smegmatis).